Consider the following 192-residue polypeptide: Ribosome maturation factor RimP (192 aa).

This sequence belongs to the RimP family.

It localises to the cytoplasm. Its function is as follows. Required for maturation of 30S ribosomal subunits. The chain is Ribosome maturation factor RimP from Delftia acidovorans (strain DSM 14801 / SPH-1).